We begin with the raw amino-acid sequence, 302 residues long: Fluoroacetate dehalogenase (302 aa).

Residues Pro32–Asp270 enclose the AB hydrolase-1 domain. Catalysis depends on Asp110, which acts as the Nucleophile. Fluoroacetate is bound by residues Arg111, Arg114, His155, Trp156, and Tyr219. The active-site Proton acceptor is the His280.

The protein belongs to the AB hydrolase superfamily. Epoxide hydrolase family. Homodimer.

The enzyme catalyses a haloacetate + H2O = a halide anion + glycolate + H(+). It catalyses the reaction fluoroacetate + H2O = fluoride + glycolate + H(+). It carries out the reaction chloroacetate + H2O = glycolate + chloride + H(+). Catalyzes the hydrolytic defluorination of fluoroacetate to produce glycolate. Has lower activity towards chloroacetate and bromoacetate. The polypeptide is Fluoroacetate dehalogenase (Rhodopseudomonas palustris (strain ATCC BAA-98 / CGA009)).